A 161-amino-acid polypeptide reads, in one-letter code: MKKFTQIIDQQKALELTSTEKPKLTLCLTMDERTKSRLKVALSDGQEAGLFLPRGTVLKEGDILLSEEGDVVTIEAAKEQVSTVYSDDPLLLARVCYHLGNRHVPLQIEAGWCRYFHDHVLDDMARGLGATVVVGLEKYQPEPGAYGGSSGGHHHHHDHHH.

Belongs to the UreE family. As to quaternary structure, homodimer.

The protein localises to the cytoplasm. Functionally, involved in urease metallocenter assembly. Binds nickel. Probably functions as a nickel donor during metallocenter assembly. It is not essential for urease activity. The sequence is that of Urease accessory protein UreE from Proteus mirabilis (strain HI4320).